An 832-amino-acid polypeptide reads, in one-letter code: Protein wech (832 aa).

Positions 1–14 (MMELLSNNSVPQQM) are enriched in polar residues. The interval 1 to 42 (MMELLSNNSVPQQMASSNAPSANNVAHSSTANGSGGGSVSSN) is disordered. A compositionally biased stretch (low complexity) spans 15–32 (ASSNAPSANNVAHSSTAN). Phosphoserine is present on serine 107. B box-type zinc fingers lie at residues 118-163 (NSSI…IVSL) and 184-224 (SGNF…YASI). Zn(2+)-binding residues include cysteine 123, cysteine 126, cysteine 145, histidine 149, cysteine 189, histidine 192, cysteine 211, and histidine 216. Serine 470, serine 475, and serine 506 each carry phosphoserine. 5 NHL repeats span residues 537-580 (SLSF…FNPD), 584-627 (KFKF…FTAS), 631-674 (LLKF…FDSE), 680-722 (QIVF…IDPD), and 727-770 (LSVK…FNQN).

As to quaternary structure, interacts with the head domain of rhea and the kinase domain of Ilk. Interacts with AGO1. Interacts with mei-P26. In terms of tissue distribution, expressed in ovarian germline stem cells (at protein level). Expressed ubiquitously in all epithelial cells during early stages of embryogenesis. Specifically expressed at epidermal muscle attachment site.

Vital for larval development. Plays a role in tumor formation. A crucial component for the physical link between integrins and the cytoskeleton in the epidermal muscle attachment sites. This Drosophila melanogaster (Fruit fly) protein is Protein wech (wech).